The following is a 362-amino-acid chain: DNA replication and repair protein RecF (362 aa).

30–37 (GLNAQGKS) serves as a coordination point for ATP.

The protein belongs to the RecF family.

The protein localises to the cytoplasm. In terms of biological role, the RecF protein is involved in DNA metabolism; it is required for DNA replication and normal SOS inducibility. RecF binds preferentially to single-stranded, linear DNA. It also seems to bind ATP. This chain is DNA replication and repair protein RecF, found in Thermoanaerobacter pseudethanolicus (strain ATCC 33223 / 39E) (Clostridium thermohydrosulfuricum).